A 148-amino-acid chain; its full sequence is Gametocyte-specific factor 1-like (148 aa).

2 CHHC U11-48K-type zinc fingers span residues 6-33 and 40-67; these read FEICPYDPHHRIPLSRFQYHLASCRRKN and MATCKYNACHVVPIKNLEEHEAVCVNRS. Residues Cys9, His15, His25, Cys29, Cys43, His49, His59, and Cys63 each contribute to the Zn(2+) site. Positions 67-99 are disordered; it reads SAVEEEDTENPLKVSPPSSEQNDDTQQVSPCLP. The span at 82 to 95 shows a compositional bias: polar residues; it reads PPSSEQNDDTQQVS.

The protein belongs to the UPF0224 (FAM112) family.

The polypeptide is Gametocyte-specific factor 1-like (GTSF1L) (Homo sapiens (Human)).